The primary structure comprises 231 residues: ADP-ribosylation factor-like protein 6-interacting protein 4 (231 aa).

Residues methionine 1–arginine 19 are compositionally biased toward basic residues. The disordered stretch occupies residues methionine 1–aspartate 154. Over residues arginine 20–serine 34 the composition is skewed to basic and acidic residues. Low complexity predominate over residues threonine 64–serine 89. Residues arginine 92–lysine 119 are compositionally biased toward basic residues. Phosphoserine is present on residues serine 142 and serine 176. Lysine 193 participates in a covalent cross-link: Glycyl lysine isopeptide (Lys-Gly) (interchain with G-Cter in SUMO2).

Belongs to the ARL6IP4 family. In terms of assembly, interacts with ARL6. Interacts with ZCCHC17. Interacts with SRSF2.

It is found in the nucleus. The protein resides in the nucleolus. It localises to the nucleus speckle. Functionally, involved in modulating alternative pre-mRNA splicing with either 5' distal site activation or preferential use of 3' proximal site. This is ADP-ribosylation factor-like protein 6-interacting protein 4 (Arl6ip4) from Rattus norvegicus (Rat).